The primary structure comprises 471 residues: Putative multidrug resistance protein MdtD (471 aa).

Residues 1–11 (MTDLPDSTRWQ) lie on the Periplasmic side of the membrane. A helical membrane pass occupies residues 12–32 (LWIVAFGFFMQSLDTTIVNTA). Residues 33-48 (LPSMAQSLGESPLHMH) are Cytoplasmic-facing. The chain crosses the membrane as a helical span at residues 49–69 (MVIVSYVLTVAVMLPASGWLA). The Periplasmic portion of the chain corresponds to 70–76 (DKVGVRN). Residues 77–97 (IFFTAIVLFTLGSLFCALSGT) traverse the membrane as a helical segment. Residues 98–101 (LNEL) are Cytoplasmic-facing. Residues 102–124 (LLARALQGVGGAMMVPVGRLTVM) traverse the membrane as a helical segment. The Periplasmic segment spans residues 125–137 (KIVPREQYMAAMT). Residues 138-158 (FVTLPGQVGPLLGPALGGLLV) form a helical membrane-spanning segment. At 159–164 (EYASWH) the chain is on the cytoplasmic side. The chain crosses the membrane as a helical span at residues 165-185 (WIFLINIPVGIIGAIATLMLM). The Periplasmic portion of the chain corresponds to 186 to 196 (PNYTMQTRRFD). The chain crosses the membrane as a helical span at residues 197–217 (LSGFLLLAVGMAVLTLALDGS). Residues 218 to 224 (KGTGFSP) lie on the Cytoplasmic side of the membrane. A helical membrane pass occupies residues 225-245 (LAIAGLVAVGVVALVLYLLHA). Over 246 to 262 (QNNNRALFSLKLFRTRT) the chain is Periplasmic. A helical membrane pass occupies residues 263–283 (FSLGLAGSFAGRIGSGMLPFM). Topologically, residues 284 to 285 (TP) are cytoplasmic. Residues 286 to 306 (VFLQIGLGFSPFHAGLMMIPM) traverse the membrane as a helical segment. Residues 307-341 (VLGSMGMKRIVVQVVNRFGYRRVLVATTLGLSLVT) lie on the Periplasmic side of the membrane. The chain crosses the membrane as a helical span at residues 342–362 (LLFMTTALLGWYYVLPFVLFL). Residues 363–395 (QGMVNSTRFSSMNTLTLKDLPDNLASSGNSLLS) lie on the Cytoplasmic side of the membrane. Residues 396-416 (MIMQLSMSIGVTIAGLLLGLF) form a helical membrane-spanning segment. At 417–430 (GSQHVSVDSGTTQT) the chain is on the periplasmic side. The helical transmembrane segment at 431 to 451 (VFMYTWLSMAFIIALPAFVFA) threads the bilayer. Topologically, residues 452 to 471 (RVPSDTHQNVAISRRKRSAQ) are cytoplasmic.

The protein belongs to the major facilitator superfamily. TCR/Tet family.

The protein localises to the cell inner membrane. The protein is Putative multidrug resistance protein MdtD of Escherichia coli O45:K1 (strain S88 / ExPEC).